Here is a 136-residue protein sequence, read N- to C-terminus: Small ribosomal subunit protein uS12 (136 aa).

3-methylthioaspartic acid is present on D89. A disordered region spans residues 104–136 (TAGVNGRTQRRSKYGAKRPKPGQAAAAAKGKKK). Over residues 111 to 123 (TQRRSKYGAKRPK) the composition is skewed to basic residues. Residues 124 to 136 (PGQAAAAAKGKKK) are compositionally biased toward low complexity.

This sequence belongs to the universal ribosomal protein uS12 family. In terms of assembly, part of the 30S ribosomal subunit. Contacts proteins S8 and S17. May interact with IF1 in the 30S initiation complex.

Functionally, with S4 and S5 plays an important role in translational accuracy. In terms of biological role, interacts with and stabilizes bases of the 16S rRNA that are involved in tRNA selection in the A site and with the mRNA backbone. Located at the interface of the 30S and 50S subunits, it traverses the body of the 30S subunit contacting proteins on the other side and probably holding the rRNA structure together. The combined cluster of proteins S8, S12 and S17 appears to hold together the shoulder and platform of the 30S subunit. In Parabacteroides distasonis (strain ATCC 8503 / DSM 20701 / CIP 104284 / JCM 5825 / NCTC 11152), this protein is Small ribosomal subunit protein uS12.